Consider the following 87-residue polypeptide: Neutrophil antibiotic peptide NP-3A (87 aa).

The first 19 residues, 1 to 19, serve as a signal peptide directing secretion; that stretch reads MRTLTLLTTLLLLALHTQA. A propeptide spanning residues 20-58 is cleaved from the precursor; sequence ESPQGSTKEAPDEEQDISVFFGGDKGTALQDAAVKAGVT. Disulfide bonds link Cys-59–Cys-87, Cys-61–Cys-76, and Cys-66–Cys-86.

It belongs to the alpha-defensin family. In terms of tissue distribution, highest expression in bone marrow and to a much lesser extent in small intestine.

It is found in the secreted. Functionally, active in vitro against S.aureus, fungi, Gram-positive and Gram-negative bacteria and to a lesser extent against an enveloped virus. This is Neutrophil antibiotic peptide NP-3A from Rattus norvegicus (Rat).